The following is a 197-amino-acid chain: 3-isopropylmalate dehydratase small subunit (197 aa).

This sequence belongs to the LeuD family. LeuD type 1 subfamily. Heterodimer of LeuC and LeuD.

The catalysed reaction is (2R,3S)-3-isopropylmalate = (2S)-2-isopropylmalate. Its pathway is amino-acid biosynthesis; L-leucine biosynthesis; L-leucine from 3-methyl-2-oxobutanoate: step 2/4. Its function is as follows. Catalyzes the isomerization between 2-isopropylmalate and 3-isopropylmalate, via the formation of 2-isopropylmaleate. The polypeptide is 3-isopropylmalate dehydratase small subunit (Acidothermus cellulolyticus (strain ATCC 43068 / DSM 8971 / 11B)).